Reading from the N-terminus, the 210-residue chain is uncharacterized protein (210 aa).

Residues 4-180 (RKVYLYVFHT…AVEVLKKLDV (177 aa)) form the PfpI endopeptidase domain. C110 functions as the Nucleophile in the catalytic mechanism.

The protein belongs to the peptidase C56 family.

This is an uncharacterized protein from Bacillus subtilis (strain 168).